A 697-amino-acid chain; its full sequence is Potassium-transporting ATPase ATP-binding subunit (697 aa).

A run of 4 helical transmembrane segments spans residues 55 to 75, 79 to 99, 245 to 265, and 271 to 291; these read PIMF…FFPS, SIPG…VLFA, LTLI…YLGF, and VLVA…LSAI. Asp-324 functions as the 4-aspartylphosphate intermediate in the catalytic mechanism. Residues Asp-361, Glu-365, 393–400, and Lys-412 each bind ATP; that span reads FKAETRMS. Mg(2+) contacts are provided by Asp-535 and Asp-539. A run of 3 helical transmembrane segments spans residues 605–625, 633–653, and 677–697; these read FAII…LNIM, AILS…PLAM, and GGVI…GLFI.

The protein belongs to the cation transport ATPase (P-type) (TC 3.A.3) family. Type IA subfamily. The system is composed of three essential subunits: KdpA, KdpB and KdpC.

Its subcellular location is the cell membrane. The enzyme catalyses K(+)(out) + ATP + H2O = K(+)(in) + ADP + phosphate + H(+). In terms of biological role, part of the high-affinity ATP-driven potassium transport (or Kdp) system, which catalyzes the hydrolysis of ATP coupled with the electrogenic transport of potassium into the cytoplasm. This subunit is responsible for energy coupling to the transport system and for the release of the potassium ions to the cytoplasm. The chain is Potassium-transporting ATPase ATP-binding subunit from Bacillus cereus (strain AH820).